The sequence spans 298 residues: Ribosomal RNA small subunit methyltransferase H (298 aa).

Residues 35-37, aspartate 55, phenylalanine 82, aspartate 100, and glutamine 107 each bind S-adenosyl-L-methionine; that span reads GGH.

Belongs to the methyltransferase superfamily. RsmH family.

The protein localises to the cytoplasm. It catalyses the reaction cytidine(1402) in 16S rRNA + S-adenosyl-L-methionine = N(4)-methylcytidine(1402) in 16S rRNA + S-adenosyl-L-homocysteine + H(+). In terms of biological role, specifically methylates the N4 position of cytidine in position 1402 (C1402) of 16S rRNA. This chain is Ribosomal RNA small subunit methyltransferase H, found in Chlamydia felis (strain Fe/C-56) (Chlamydophila felis).